A 67-amino-acid chain; its full sequence is MKTQFAILLITLVLFQMFSQSDAILGKIWEGIKSIFGKRGLNDLSDLDELFDGEISEADVDFLREIM.

The first 23 residues, 1 to 23, serve as a signal peptide directing secretion; it reads MKTQFAILLITLVLFQMFSQSDA. Phe-36 is modified (phenylalanine amide). A propeptide spanning residues 40-67 is cleaved from the precursor; the sequence is GLNDLSDLDELFDGEISEADVDFLREIM.

It belongs to the non-disulfide-bridged peptide (NDBP) superfamily. Short antimicrobial peptide (group 4) family. As to expression, expressed by the venom gland.

It is found in the secreted. It localises to the target cell membrane. Amphipathic peptide with antibacterial activities. Shows antiviral activities against the herpes simplex virus type-1. It potently inhibits the initial infection by provoking the rupture of viral envelop and the dissociation of proteins from the virions (EC(50) is 0.43 uM). It also effectively inhibits viral attachment (EC(50) is 2.87 uM), viral entry (EC(50) is 4.29 uM) and viral proliferation after infection (EC(50) is 7.86). Morever, it enters mammalian tested cells (Vero) and reduces the intracellular infectivity. The polypeptide is Peptide Hp1036 (Heterometrus petersii (Asian forest scorpion)).